The following is a 70-amino-acid chain: Putative membrane protein insertion efficiency factor (70 aa).

The protein belongs to the UPF0161 family.

It localises to the cell inner membrane. Its function is as follows. Could be involved in insertion of integral membrane proteins into the membrane. The sequence is that of Putative membrane protein insertion efficiency factor from Sphingopyxis alaskensis (strain DSM 13593 / LMG 18877 / RB2256) (Sphingomonas alaskensis).